Consider the following 492-residue polypeptide: Trk system potassium uptake protein TrkI (492 aa).

Transmembrane regions (helical) follow at residues 20–40 (VLAV…LVLI), 47–67 (ALAF…SWIV), 81–101 (FVLT…PLVL), 143–163 (IMQW…LPFL), 196–216 (IYCG…MSPL), 246–266 (QLLW…VLYI), 282–302 (VQGL…WRVS), 334–354 (AWGA…GCSG), 403–423 (VVAF…GLSL), and 465–485 (WLLC…LVLL).

This sequence belongs to the TrkH potassium transport family.

The protein localises to the cell inner membrane. Medium-affinity potassium transport system. Probably interacts with Trk system potassium uptake protein TrkA. Main K(+) transporter in osmotically adapted cells. The polypeptide is Trk system potassium uptake protein TrkI (trkI) (Halomonas elongata (strain ATCC 33173 / DSM 2581 / NBRC 15536 / NCIMB 2198 / 1H9)).